A 319-amino-acid polypeptide reads, in one-letter code: MFDDLSNYRPANPALWQGRMDTANQERFFQKITFIDNQNELMTKDKKTIFLGFASDAGIKRNLGRTGAKLGPDQIKTQLAKLPCHNNKHYVDLGNVVCENDELELSQSQFAQIVHFCHENGHQICAFGGGHEIAWAHYQGLSSLYPKLGVINFDAHFDLRPYKKGEFGNSGTPFSQIATYCEEKKMPFHYCCIGVQKFGNTPSLFEKAKELNVSYLSAEDLYEQSQAWQIAFLDDFILNLDHIYLTICLDVLAECYAPGVSAPQALGLSPWQIMPLLKYLIQSGKVVSLDIAELSPPLDSELKTARLAALIIAELLDTN.

H131, D154, H156, D158, C248, and D250 together coordinate Mn(2+).

This sequence belongs to the arginase family. Requires Mn(2+) as cofactor.

It carries out the reaction N-formimidoyl-L-glutamate + H2O = formamide + L-glutamate. It participates in amino-acid degradation; L-histidine degradation into L-glutamate; L-glutamate from N-formimidoyl-L-glutamate (hydrolase route): step 1/1. Catalyzes the conversion of N-formimidoyl-L-glutamate to L-glutamate and formamide. This is Formimidoylglutamase from Legionella pneumophila (strain Paris).